The sequence spans 217 residues: D-methionine transport system permease protein MetI (217 aa).

Topologically, residues 1 to 19 (MSEAMMWLLVRGVWETLAM) are periplasmic. Residues 13–204 (VWETLAMTFV…LLVVLVYLIQ (192 aa)) enclose the ABC transmembrane type-1 domain. Residues 20–40 (TFVSGFFGFVIGLPVGVLLYV) traverse the membrane as a helical segment. Topologically, residues 41-67 (TRPGQIMENARLYRSLSAVVNIFRSIP) are cytoplasmic. Residues 68-88 (FIILLVWMIPFTRIIVGTSIG) traverse the membrane as a helical segment. Residues 89–92 (LQAA) lie on the Periplasmic side of the membrane. The chain crosses the membrane as a helical span at residues 93–113 (IVPLTVGAAPFIARIVENALL). At 114-151 (EIPAGLIEASRAMGATPLQIVRKILLPEALPGLVNAAT) the chain is on the cytoplasmic side. The chain crosses the membrane as a helical span at residues 152 to 172 (ITLITLVGYSAMGGAVGAGGL). The Periplasmic portion of the chain corresponds to 173–185 (GQIGYQYGYIGYN). The helical transmembrane segment at 186-206 (ATVMNTVLVLLVVLVYLIQLS) threads the bilayer. The Cytoplasmic portion of the chain corresponds to 207–217 (GDRIVRAVTHK).

This sequence belongs to the binding-protein-dependent transport system permease family. CysTW subfamily.

It is found in the cell inner membrane. Functionally, part of the binding-protein-dependent transport system for D-methionine and the toxic methionine analog alpha-methyl-methionine. Probably responsible for the translocation of the substrate across the membrane. The sequence is that of D-methionine transport system permease protein MetI (metI) from Salmonella typhi.